The primary structure comprises 137 residues: Large ribosomal subunit protein uL16 (137 aa).

Belongs to the universal ribosomal protein uL16 family. Part of the 50S ribosomal subunit.

In terms of biological role, binds 23S rRNA and is also seen to make contacts with the A and possibly P site tRNAs. This chain is Large ribosomal subunit protein uL16, found in Azorhizobium caulinodans (strain ATCC 43989 / DSM 5975 / JCM 20966 / LMG 6465 / NBRC 14845 / NCIMB 13405 / ORS 571).